The following is a 517-amino-acid chain: Crotonobetaine/carnitine--CoA ligase (517 aa).

Belongs to the ATP-dependent AMP-binding enzyme family.

It carries out the reaction 4-(trimethylamino)butanoate + ATP + CoA = 4-(trimethylamino)butanoyl-CoA + AMP + diphosphate. The enzyme catalyses crotonobetaine + ATP + CoA = crotonobetainyl-CoA + AMP + diphosphate. The catalysed reaction is (R)-carnitine + ATP + CoA = (R)-carnitinyl-CoA + AMP + diphosphate. It participates in amine and polyamine metabolism; carnitine metabolism. In terms of biological role, catalyzes the transfer of CoA to carnitine, generating the initial carnitinyl-CoA needed for the CaiB reaction cycle. Also has activity toward crotonobetaine and gamma-butyrobetaine. This Salmonella heidelberg (strain SL476) protein is Crotonobetaine/carnitine--CoA ligase.